A 234-amino-acid polypeptide reads, in one-letter code: bZIP transcription factor 27 (234 aa).

The Nuclear localization signal motif lies at 152–159 (KKRGQDSD). Positions 163-213 (GDRRYKRMIKNRESAARSRARKQAYTNELELEIAHLQTENARLKIQQEQLK) constitute a bZIP domain. Residues 165-184 (RRYKRMIKNRESAARSRARK) form a basic motif region. A leucine-zipper region spans residues 191-212 (LELEIAHLQTENARLKIQQEQL). A Phosphothreonine modification is found at Thr-231.

It belongs to the bZIP family. In terms of assembly, self-interacts. Interacts with FT and FD/BZIP14. Interacts with CPK33. Phosphorylated. In terms of tissue distribution, expressed on the flanks of the shoot apex.

The protein resides in the nucleus. In terms of biological role, transcription factor required for the transition to flowering promoted by FT. This is bZIP transcription factor 27 from Arabidopsis thaliana (Mouse-ear cress).